Here is a 236-residue protein sequence, read N- to C-terminus: LexA repressor (236 aa).

Positions 26-46 (FDEMKEALDLRSKSGIHRLIT) form a DNA-binding region, H-T-H motif. Active-site for autocatalytic cleavage activity residues include serine 157 and lysine 195.

It belongs to the peptidase S24 family. In terms of assembly, homodimer.

The catalysed reaction is Hydrolysis of Ala-|-Gly bond in repressor LexA.. Represses a number of genes involved in the response to DNA damage (SOS response), including recA and lexA. In the presence of single-stranded DNA, RecA interacts with LexA causing an autocatalytic cleavage which disrupts the DNA-binding part of LexA, leading to derepression of the SOS regulon and eventually DNA repair. This is LexA repressor from Azorhizobium caulinodans (strain ATCC 43989 / DSM 5975 / JCM 20966 / LMG 6465 / NBRC 14845 / NCIMB 13405 / ORS 571).